The chain runs to 307 residues: uncharacterized protein (307 aa).

This is an uncharacterized protein from Acidianus hospitalis (AFV-1).